Consider the following 333-residue polypeptide: MFSQIISTSDIFTFTIILFVELVIGILGNGFIALVNIMDWTKRRSISSADQILTALAITRFLYVWFMIICILLFMLCPHLLTRSEIVTSIGIIWIVNNHFSVWLATCLGVFYFLKIANFSNSLFLYLKWRVKKVVLMIIQVSMIFLILNLLSLSMYDQFSIDVYEGNTSYNLGDSTPFPTISLFINSSKVFVITNSSHIFLPINSLFMLIPFTVSLVAFLMLIFSLWKHHKKMQVNAKPPRDASTMAHIKALQTGFSFLLLYAVYLLFIVIGMLSLRLIGGKLILLFDHISGIGFPISHSFVLILGNNKLRQASLSVLHCLRCRSKDMDTMGP.

Residues 1-13 (MFSQIISTSDIFT) lie on the Extracellular side of the membrane. A helical transmembrane segment spans residues 14-34 (FTIILFVELVIGILGNGFIAL). Over 35 to 60 (VNIMDWTKRRSISSADQILTALAITR) the chain is Cytoplasmic. The chain crosses the membrane as a helical span at residues 61–81 (FLYVWFMIICILLFMLCPHLL). The Extracellular segment spans residues 82–89 (TRSEIVTS). The chain crosses the membrane as a helical span at residues 90 to 110 (IGIIWIVNNHFSVWLATCLGV). Over 111–133 (FYFLKIANFSNSLFLYLKWRVKK) the chain is Cytoplasmic. A helical membrane pass occupies residues 134–154 (VVLMIIQVSMIFLILNLLSLS). Over 155–205 (MYDQFSIDVYEGNTSYNLGDSTPFPTISLFINSSKVFVITNSSHIFLPINS) the chain is Extracellular. N-linked (GlcNAc...) asparagine glycosylation is found at Asn186 and Asn195. The helical transmembrane segment at 206–226 (LFMLIPFTVSLVAFLMLIFSL) threads the bilayer. Over 227 to 255 (WKHHKKMQVNAKPPRDASTMAHIKALQTG) the chain is Cytoplasmic. A helical transmembrane segment spans residues 256–276 (FSFLLLYAVYLLFIVIGMLSL). The Extracellular portion of the chain corresponds to 277 to 283 (RLIGGKL). The chain crosses the membrane as a helical span at residues 284 to 304 (ILLFDHISGIGFPISHSFVLI). The Cytoplasmic portion of the chain corresponds to 305–333 (LGNNKLRQASLSVLHCLRCRSKDMDTMGP).

Belongs to the G-protein coupled receptor T2R family.

It localises to the membrane. Functionally, gustducin-coupled receptor implicated in the perception of bitter compounds in the oral cavity and the gastrointestinal tract. Signals through PLCB2 and the calcium-regulated cation channel TRPM5. This Mus musculus (Mouse) protein is Taste receptor type 2 member 110.